The primary structure comprises 204 residues: Phospholipase D (204 aa).

The N-terminal stretch at 1–22 is a signal peptide; it reads MKSKNNKFIAMSIPFILGTALG. A PLD phosphodiesterase domain is found at 142–169; that stretch reads VPGIAHNKVIIIDKKKVITGSFNFTVAA. Catalysis depends on residues His-147, Lys-149, and Asp-154.

It belongs to the phospholipase D family. In terms of assembly, homodimer.

It localises to the secreted. It catalyses the reaction a 1,2-diacyl-sn-glycero-3-phosphocholine + H2O = a 1,2-diacyl-sn-glycero-3-phosphate + choline + H(+). Its function is as follows. Could be a virulence factor. This is Phospholipase D (pld) from Rickettsia typhi (strain ATCC VR-144 / Wilmington).